We begin with the raw amino-acid sequence, 423 residues long: Zinc finger protein Gfi-1 (423 aa).

The SNAG domain stretch occupies residues 1–20 (MPRSFLVKSKKAHSYHQPRS). A disordered region spans residues 1-76 (MPRSFLVKSK…DRASASPNSC (76 aa)). A phosphoserine mark is found at Ser-20 and Ser-57. Positions 48 to 57 (SKMEPRERLS) are enriched in basic and acidic residues. The tract at residues 141-258 (RQCSALERSA…LLLGGGSYKC (118 aa)) is required for interaction with RELA. 6 C2H2-type zinc fingers span residues 256–279 (YKCI…RRSH), 285–307 (FACE…KAVH), 313–335 (FDCK…LLIH), 341–363 (YPCQ…TFIH), 369–391 (HKCQ…SRKH), and 397–420 (FGCD…ETQH).

In terms of assembly, interacts (via the zinc-finger domain) with ARIH2; the interaction prevents GFI1 ubiquitination and proteasomal degradation. Forms a complex with EHMT2 and HDAC1 to promote 'Lys-9' dimethylation of H3 (H3K9Me2) and repress expression of target genes. Interacts directly with EHMT2. Interacts with RUNX1T1; the interaction represses HDAC-mediated transcriptional activity. Interacts (via the C-terminal zinc fingers) with ZBTB17; the interaction results in the recruitment of GFI1 to the CDKN1A/p21 and CDKNIB promoters and repression of transcription. Interacts with U2AF1L4. Component of RCOR-GFI-KDM1A-HDAC complexes. Interacts directly with RCOR1, KDM1A and HDAC2. Also interacts with HDAC1. Component of the GFI1-AJUBA-HDAC1 repressor complex. Interacts directly with AJUBA (via its LIM domains); the interaction results in the HDAC-dependent corepression of a subset of GFI1 target genes and, occurs independently of the SNAG domain. Interacts with SPI1; the interaction inhibits SPI1 transcriptional activity targeted at macrophage-specific genes, repressing macrophage differentiation of myeloid progenitor cells and promoting granulocyte commitment. Interacts with PIAS3; the interaction relieves the inhibitory effect of PIAS3 on STAT3-mediated transcriptional activity. Interacts with RELA; the interaction occurs on liposaccharide (LPS) stimulation and controls RELA DNA binding activity and regulates endotoxin-mediated TOLL-like receptor inflammatory response. Ubiquitinated.

The protein resides in the nucleus. Its function is as follows. Transcription repressor essential for hematopoiesis. Functions in a cell-context and development-specific manner. Binds to 5'-TAAATCAC[AT]GCA-3' in the promoter region of a large number of genes. Component of several complexes, including the EHMT2-GFI1-HDAC1, AJUBA-GFI1-HDAC1 and RCOR-GFI-KDM1A-HDAC complexes, that suppress, via histone deacetylase (HDAC) recruitment, a number of genes implicated in multilineage blood cell development. Regulates neutrophil differentiation, promotes proliferation of lymphoid cells, and is required for granulocyte development. Inhibits SPI1 transcriptional activity at macrophage-specific genes, repressing macrophage differentiation of myeloid progenitor cells and promoting granulocyte commitment. Mediates, together with U2AF1L4, the alternative splicing of CD45 and controls T-cell receptor signaling. Regulates the endotoxin-mediated Toll-like receptor (TLR) inflammatory response by antagonizing RELA. Cooperates with CBFA2T2 to regulate ITGB1-dependent neurite growth. Controls cell-cycle progression by repressing CDKNIA/p21 transcription in response to TGFB1 via recruitment of GFI1 by ZBTB17 to the CDKNIA/p21 and CDKNIB promoters. Required for the maintenance of inner ear hair cells. In addition to its role in transcription, acts as a substrate adapter for PRMT1 in the DNA damage response. Facilitates the recognition of TP53BP1 and MRE11 substrates by PRMT1, promoting their methylation and the DNA damage response. The sequence is that of Zinc finger protein Gfi-1 (Gfi1) from Mus musculus (Mouse).